The chain runs to 298 residues: dTDP-4-dehydrorhamnose reductase (298 aa).

NADH is bound by residues 10–12 (GQV), 35–36 (DL), and 59–61 (AYT). NADPH contacts are provided by residues 11–12 (QV), 35–36 (DL), 59–61 (AYT), and tyrosine 98. 100–101 (TD) provides a ligand contact to dTDP-beta-L-rhamnose. Tyrosine 124 and lysine 128 together coordinate NADH. NADPH-binding residues include tyrosine 124 and lysine 128. The Proton donor/acceptor role is filled by tyrosine 124. Tryptophan 149 lines the dTDP-beta-L-rhamnose pocket.

It belongs to the dTDP-4-dehydrorhamnose reductase family. Homodimer. The cofactor is Mg(2+).

The enzyme catalyses dTDP-beta-L-rhamnose + NADP(+) = dTDP-4-dehydro-beta-L-rhamnose + NADPH + H(+). The protein operates within carbohydrate biosynthesis; dTDP-L-rhamnose biosynthesis. It participates in bacterial outer membrane biogenesis; LPS O-antigen biosynthesis. Functionally, involved in the biosynthesis of the dTDP-L-rhamnose which is an important component of lipopolysaccharide (LPS). Catalyzes the reduction of dTDP-6-deoxy-L-lyxo-4-hexulose to yield dTDP-L-rhamnose. This Burkholderia thailandensis (strain ATCC 700388 / DSM 13276 / CCUG 48851 / CIP 106301 / E264) protein is dTDP-4-dehydrorhamnose reductase.